The sequence spans 92 residues: Small ribosomal subunit protein uS19 (92 aa).

This sequence belongs to the universal ribosomal protein uS19 family.

Functionally, protein S19 forms a complex with S13 that binds strongly to the 16S ribosomal RNA. This Phenylobacterium zucineum (strain HLK1) protein is Small ribosomal subunit protein uS19.